Here is a 175-residue protein sequence, read N- to C-terminus: Inorganic pyrophosphatase (175 aa).

Substrate contacts are provided by K30, R44, and Y56. D66, D71, and D103 together coordinate Mg(2+). Y142 lines the substrate pocket.

Belongs to the PPase family. Homohexamer. Requires Mg(2+) as cofactor.

The protein resides in the cytoplasm. It carries out the reaction diphosphate + H2O = 2 phosphate + H(+). Its function is as follows. Catalyzes the hydrolysis of inorganic pyrophosphate (PPi) forming two phosphate ions. The sequence is that of Inorganic pyrophosphatase from Haemophilus ducreyi (strain 35000HP / ATCC 700724).